The sequence spans 1866 residues: Protein strawberry notch homolog (1866 aa).

Residues glutamine 19–serine 28 show a composition bias toward low complexity. Disordered stretches follow at residues glutamine 19–serine 63, threonine 132–lysine 151, leucine 156–isoleucine 253, glycine 561–lysine 581, and glycine 1112–serine 1308. Composition is skewed to polar residues over residues glutamine 37–serine 63 and proline 134–valine 146. Residues threonine 161–serine 176 are compositionally biased toward low complexity. Polar residues-rich tracts occupy residues aspartate 191–serine 203 and threonine 210–arginine 228. The segment covering serine 229–serine 239 has biased composition (low complexity). Residues arginine 566–serine 577 show a composition bias toward polar residues. Residues glycine 1112–glycine 1126 show a composition bias toward low complexity. The segment covering aspartate 1142 to methionine 1152 has biased composition (acidic residues). The segment covering glutamate 1164 to glutamate 1177 has biased composition (basic and acidic residues). Positions serine 1194–alanine 1213 are enriched in acidic residues. 2 stretches are compositionally biased toward basic and acidic residues: residues arginine 1262–arginine 1281 and arginine 1290–glutamine 1304.

This sequence belongs to the SBNO family. In terms of tissue distribution, expressed in the somatic gonad, neurons, hypodermal cells, seam cells, the excretory system, and intestinal cells (at protein level).

The protein resides in the nucleus. Transcriptional activator that functions upstream of the let-60/Ras and let-23/EGFR signaling pathways to positively regulate lin-3 expression and thereby promote vulval induction. Plays a role in excretory duct development. Plays a role in male tail development. The protein is Protein strawberry notch homolog of Caenorhabditis elegans.